The chain runs to 372 residues: tRNA-specific 2-thiouridylase MnmA (372 aa).

ATP contacts are provided by residues 17–24 (GMSGGVDS) and Met43. The interaction with target base in tRNA stretch occupies residues 103 to 105 (NPD). Cys108 acts as the Nucleophile in catalysis. Cysteines 108 and 207 form a disulfide. Gly133 provides a ligand contact to ATP. An interaction with tRNA region spans residues 157–159 (KDQ). Cys207 acts as the Cysteine persulfide intermediate in catalysis. The interaction with tRNA stretch occupies residues 319–320 (RY).

It belongs to the MnmA/TRMU family.

It localises to the cytoplasm. The enzyme catalyses S-sulfanyl-L-cysteinyl-[protein] + uridine(34) in tRNA + AH2 + ATP = 2-thiouridine(34) in tRNA + L-cysteinyl-[protein] + A + AMP + diphosphate + H(+). Functionally, catalyzes the 2-thiolation of uridine at the wobble position (U34) of tRNA, leading to the formation of s(2)U34. This Vibrio cholerae serotype O1 (strain ATCC 39541 / Classical Ogawa 395 / O395) protein is tRNA-specific 2-thiouridylase MnmA.